Consider the following 550-residue polypeptide: Carboxypeptidase Y homolog A (550 aa).

A signal peptide spans 1 to 18; sequence MKSLVLGLLVGSAIASGP. The propeptide occupies 19 to 131; sequence LQHVLHAPPE…KLAQYDLRIR (113 aa). Disulfide bonds link cysteine 185–cysteine 424, cysteine 319–cysteine 333, cysteine 343–cysteine 366, cysteine 350–cysteine 359, and cysteine 388–cysteine 394. An N-linked (GlcNAc...) asparagine glycan is attached at asparagine 216. Serine 272 is an active-site residue. The active site involves aspartate 463. Residues asparagine 493 and asparagine 514 are each glycosylated (N-linked (GlcNAc...) asparagine). Histidine 525 is an active-site residue.

This sequence belongs to the peptidase S10 family.

Its subcellular location is the vacuole. It carries out the reaction Release of a C-terminal amino acid with broad specificity.. In terms of biological role, vacuolar carboxypeptidase involved in degradation of small peptides. Digests preferentially peptides containing an aliphatic or hydrophobic residue in P1' position, as well as methionine, leucine or phenylalanine in P1 position of ester substrate. The protein is Carboxypeptidase Y homolog A (CPYA) of Paracoccidioides lutzii (strain ATCC MYA-826 / Pb01) (Paracoccidioides brasiliensis).